Reading from the N-terminus, the 246-residue chain is NH(3)-dependent NAD(+) synthetase (246 aa).

29–36 (GLSGGIDS) provides a ligand contact to ATP. Residue aspartate 35 participates in Mg(2+) binding. Deamido-NAD(+) is bound at residue arginine 110. Threonine 130 contributes to the ATP binding site. Glutamate 135 is a binding site for Mg(2+). ATP-binding residues include lysine 159 and serine 181.

The protein belongs to the NAD synthetase family. Homodimer.

It catalyses the reaction deamido-NAD(+) + NH4(+) + ATP = AMP + diphosphate + NAD(+) + H(+). The protein operates within cofactor biosynthesis; NAD(+) biosynthesis; NAD(+) from deamido-NAD(+) (ammonia route): step 1/1. Catalyzes the ATP-dependent amidation of deamido-NAD to form NAD. Uses ammonia as a nitrogen source. This is NH(3)-dependent NAD(+) synthetase from Campylobacter jejuni subsp. jejuni serotype O:23/36 (strain 81-176).